The primary structure comprises 362 residues: Peptide chain release factor 1 (362 aa).

Glutamine 237 bears the N5-methylglutamine mark.

This sequence belongs to the prokaryotic/mitochondrial release factor family. In terms of processing, methylated by PrmC. Methylation increases the termination efficiency of RF1.

The protein resides in the cytoplasm. In terms of biological role, peptide chain release factor 1 directs the termination of translation in response to the peptide chain termination codons UAG and UAA. The sequence is that of Peptide chain release factor 1 (prfA) from Aquifex aeolicus (strain VF5).